The following is a 372-amino-acid chain: tRNA-specific 2-thiouridylase MnmA (372 aa).

ATP is bound by residues 16–23 (GMSGGVDS) and methionine 42. Residues 102–104 (NPD) form an interaction with target base in tRNA region. The Nucleophile role is filled by cysteine 107. A disulfide bridge connects residues cysteine 107 and cysteine 205. Glycine 132 lines the ATP pocket. The interaction with tRNA stretch occupies residues 155 to 157 (KDQ). The active-site Cysteine persulfide intermediate is the cysteine 205. An interaction with tRNA region spans residues 317–318 (RY).

It belongs to the MnmA/TRMU family.

Its subcellular location is the cytoplasm. It catalyses the reaction S-sulfanyl-L-cysteinyl-[protein] + uridine(34) in tRNA + AH2 + ATP = 2-thiouridine(34) in tRNA + L-cysteinyl-[protein] + A + AMP + diphosphate + H(+). In terms of biological role, catalyzes the 2-thiolation of uridine at the wobble position (U34) of tRNA, leading to the formation of s(2)U34. The sequence is that of tRNA-specific 2-thiouridylase MnmA from Shewanella baltica (strain OS185).